Consider the following 98-residue polypeptide: Small ribosomal subunit protein eS24 (98 aa).

This sequence belongs to the eukaryotic ribosomal protein eS24 family.

The sequence is that of Small ribosomal subunit protein eS24 from Thermococcus sibiricus (strain DSM 12597 / MM 739).